A 146-amino-acid polypeptide reads, in one-letter code: Holo-[acyl-carrier-protein] synthase (146 aa).

Mg(2+) contacts are provided by aspartate 8 and glutamate 61.

It belongs to the P-Pant transferase superfamily. AcpS family. Mg(2+) serves as cofactor.

The protein resides in the cytoplasm. The enzyme catalyses apo-[ACP] + CoA = holo-[ACP] + adenosine 3',5'-bisphosphate + H(+). In terms of biological role, transfers the 4'-phosphopantetheine moiety from coenzyme A to a Ser of acyl-carrier-protein. In Rhodopseudomonas palustris (strain ATCC BAA-98 / CGA009), this protein is Holo-[acyl-carrier-protein] synthase.